Here is a 47-residue protein sequence, read N- to C-terminus: Delta-stichotoxin-Hcr3a (47 aa).

Proline 3 carries the hydroxyproline modification. 3 disulfide bridges follow: cysteine 4–cysteine 44, cysteine 6–cysteine 34, and cysteine 27–cysteine 45.

This sequence belongs to the sea anemone sodium channel inhibitory toxin family. Type I subfamily.

It localises to the secreted. The protein resides in the nematocyst. Inhibits voltage-gated sodium channels (Nav). The chain is Delta-stichotoxin-Hcr3a from Radianthus crispa (Leathery sea anemone).